The sequence spans 574 residues: Sulfate adenylyltransferase (574 aa).

The segment at 1–170 (MANAPHGGVL…VQAVSKPAYY (170 aa)) is N-terminal. Residues 171–395 (DYVALRYTPA…LRESYPPKAK (225 aa)) form a catalytic region. Glutamine 198 contributes to the sulfate binding site. ATP contacts are provided by residues 198–201 (QTRN) and 292–295 (GRDH). Residues threonine 199, arginine 200, and asparagine 201 contribute to the active site. Residue arginine 200 coordinates sulfate. Alanine 296 is a binding site for sulfate. An ATP-binding site is contributed by methionine 334. The interval 396–574 (QGFTLFLTGL…ILLLEAQSLI (179 aa)) is allosteric regulation domain; adenylyl-sulfate kinase-like. Residues 435–438 (ETVR), arginine 452, 478–479 (IA), and lysine 519 each bind 3'-phosphoadenylyl sulfate.

In the N-terminal section; belongs to the sulfate adenylyltransferase family. It in the C-terminal section; belongs to the APS kinase family. In terms of assembly, homohexamer. Dimer of trimers.

It localises to the cytoplasm. It catalyses the reaction sulfate + ATP + H(+) = adenosine 5'-phosphosulfate + diphosphate. The protein operates within sulfur metabolism; hydrogen sulfide biosynthesis; sulfite from sulfate: step 1/3. Its activity is regulated as follows. Allosterically inhibited by 3'-phosphoadenosine 5'-phosphosulfate (PAPS). Its function is as follows. Catalyzes the first intracellular reaction of sulfate assimilation, forming adenosine-5'-phosphosulfate (APS) from inorganic sulfate and ATP. Plays an important role in sulfate activation as a component of the biosynthesis pathway of sulfur-containing amino acids. The protein is Sulfate adenylyltransferase of Mycosarcoma maydis (Corn smut fungus).